We begin with the raw amino-acid sequence, 34 residues long: Photosystem II reaction center protein M (34 aa).

The chain crosses the membrane as a helical span at residues 5–25; it reads ILAFIATALFILIPTAFLLIL.

The protein belongs to the PsbM family. In terms of assembly, PSII is composed of 1 copy each of membrane proteins PsbA, PsbB, PsbC, PsbD, PsbE, PsbF, PsbH, PsbI, PsbJ, PsbK, PsbL, PsbM, PsbT, PsbX, PsbY, PsbZ, Psb30/Ycf12, at least 3 peripheral proteins of the oxygen-evolving complex and a large number of cofactors. It forms dimeric complexes.

The protein localises to the plastid. Its subcellular location is the chloroplast thylakoid membrane. One of the components of the core complex of photosystem II (PSII). PSII is a light-driven water:plastoquinone oxidoreductase that uses light energy to abstract electrons from H(2)O, generating O(2) and a proton gradient subsequently used for ATP formation. It consists of a core antenna complex that captures photons, and an electron transfer chain that converts photonic excitation into a charge separation. This subunit is found at the monomer-monomer interface. In Anthoceros angustus (Hornwort), this protein is Photosystem II reaction center protein M.